The primary structure comprises 128 residues: Fluoride-specific ion channel FluC (128 aa).

4 helical membrane passes run 5–25 (IVAI…LSLA), 35–55 (LGTL…AVVF), 67–87 (LFVI…SVEV), and 96–116 (FGWA…LTAL). Na(+) is bound by residues G75 and T78.

Belongs to the fluoride channel Fluc/FEX (TC 1.A.43) family.

It is found in the cell inner membrane. The catalysed reaction is fluoride(in) = fluoride(out). Its activity is regulated as follows. Na(+) is not transported, but it plays an essential structural role and its presence is essential for fluoride channel function. Fluoride-specific ion channel. Important for reducing fluoride concentration in the cell, thus reducing its toxicity. In Burkholderia orbicola (strain MC0-3), this protein is Fluoride-specific ion channel FluC.